Here is a 156-residue protein sequence, read N- to C-terminus: MDTVVKLNNIFSGLPKNKKSKVLGRGIGCGKGKTSGRGHKGQKARSGVSINGFEGGQQSIFTRLPKRGFNSLLKHRYSIVNLSTIQRLIDSKKIEDVSAITKEVLYNLGVISSIKEKIKILGNGKLNTAVAIEYDFISKSAESQVTLLSNVSASKE.

The disordered stretch occupies residues 29-48 (CGKGKTSGRGHKGQKARSGV). Residues 34–43 (TSGRGHKGQK) show a composition bias toward basic residues.

The protein belongs to the universal ribosomal protein uL15 family. As to quaternary structure, part of the 50S ribosomal subunit.

Binds to the 23S rRNA. In Ehrlichia chaffeensis (strain ATCC CRL-10679 / Arkansas), this protein is Large ribosomal subunit protein uL15.